Consider the following 542-residue polypeptide: Chaperonin GroEL (542 aa).

ATP-binding positions include 29–32 (TLGP), 86–90 (DGTTT), glycine 413, 476–478 (NAA), and aspartate 492. Residues 522-542 (PDENGPAAVPDMGMGGMGGMM) form a disordered region.

It belongs to the chaperonin (HSP60) family. Forms a cylinder of 14 subunits composed of two heptameric rings stacked back-to-back. Interacts with the co-chaperonin GroES.

The protein resides in the cytoplasm. It carries out the reaction ATP + H2O + a folded polypeptide = ADP + phosphate + an unfolded polypeptide.. Functionally, together with its co-chaperonin GroES, plays an essential role in assisting protein folding. The GroEL-GroES system forms a nano-cage that allows encapsulation of the non-native substrate proteins and provides a physical environment optimized to promote and accelerate protein folding. The chain is Chaperonin GroEL from Listeria monocytogenes serotype 4b (strain CLIP80459).